We begin with the raw amino-acid sequence, 435 residues long: Gamma-glutamyl phosphate reductase (435 aa).

Belongs to the gamma-glutamyl phosphate reductase family.

The protein resides in the cytoplasm. It catalyses the reaction L-glutamate 5-semialdehyde + phosphate + NADP(+) = L-glutamyl 5-phosphate + NADPH + H(+). It participates in amino-acid biosynthesis; L-proline biosynthesis; L-glutamate 5-semialdehyde from L-glutamate: step 2/2. Functionally, catalyzes the NADPH-dependent reduction of L-glutamate 5-phosphate into L-glutamate 5-semialdehyde and phosphate. The product spontaneously undergoes cyclization to form 1-pyrroline-5-carboxylate. The polypeptide is Gamma-glutamyl phosphate reductase (Bradyrhizobium diazoefficiens (strain JCM 10833 / BCRC 13528 / IAM 13628 / NBRC 14792 / USDA 110)).